The primary structure comprises 345 residues: Phosphate acyltransferase (345 aa).

This sequence belongs to the PlsX family. As to quaternary structure, homodimer. Probably interacts with PlsY.

It localises to the cytoplasm. It catalyses the reaction a fatty acyl-[ACP] + phosphate = an acyl phosphate + holo-[ACP]. It participates in lipid metabolism; phospholipid metabolism. Catalyzes the reversible formation of acyl-phosphate (acyl-PO(4)) from acyl-[acyl-carrier-protein] (acyl-ACP). This enzyme utilizes acyl-ACP as fatty acyl donor, but not acyl-CoA. This is Phosphate acyltransferase from Limosilactobacillus fermentum (strain NBRC 3956 / LMG 18251) (Lactobacillus fermentum).